We begin with the raw amino-acid sequence, 801 residues long: LPS-assembly protein LptD (801 aa).

A signal peptide spans Met-1–Ala-23.

It belongs to the LptD family. In terms of assembly, component of the lipopolysaccharide transport and assembly complex. Interacts with LptE and LptA.

Its subcellular location is the cell outer membrane. In terms of biological role, together with LptE, is involved in the assembly of lipopolysaccharide (LPS) at the surface of the outer membrane. This Neisseria gonorrhoeae (strain ATCC 700825 / FA 1090) protein is LPS-assembly protein LptD.